Consider the following 429-residue polypeptide: 3-phosphoshikimate 1-carboxyvinyltransferase (429 aa).

The 3-phosphoshikimate site is built by K20, S21, and R25. K20 serves as a coordination point for phosphoenolpyruvate. G89 and R118 together coordinate phosphoenolpyruvate. The 3-phosphoshikimate site is built by S164, S165, Q166, S192, D311, and K338. Position 166 (Q166) interacts with phosphoenolpyruvate. D311 (proton acceptor) is an active-site residue. The phosphoenolpyruvate site is built by R342 and R384.

The protein belongs to the EPSP synthase family. Monomer.

The protein localises to the cytoplasm. It catalyses the reaction 3-phosphoshikimate + phosphoenolpyruvate = 5-O-(1-carboxyvinyl)-3-phosphoshikimate + phosphate. It functions in the pathway metabolic intermediate biosynthesis; chorismate biosynthesis. Functionally, catalyzes the transfer of the enolpyruvyl moiety of phosphoenolpyruvate (PEP) to the 5-hydroxyl of shikimate-3-phosphate (S3P) to produce enolpyruvyl shikimate-3-phosphate and inorganic phosphate. The protein is 3-phosphoshikimate 1-carboxyvinyltransferase of Methanococcus maripaludis (strain C7 / ATCC BAA-1331).